Reading from the N-terminus, the 566-residue chain is SRSF protein kinase 3 (566 aa).

A compositionally biased stretch (gly residues) spans 1–13 (MSASTGGGGGGDS). The segment at 1–60 (MSASTGGGGGGDSGSSSSSSSQASCGPEPSGSELAPPTPAPRMLQGLLGSDDEEQEDPKD) is disordered. Positions 14-26 (GSSSSSSSQASCG) are enriched in low complexity. Serine 50 carries the phosphoserine modification. In terms of domain architecture, Protein kinase spans 79 to 564 (YHVVRKLGWG…AADCLQHPWL (486 aa)). ATP contacts are provided by residues 85-93 (LGWGHFSTV) and lysine 108. The Proton acceptor role is filled by aspartate 212. Residues 236 to 254 (EWQQSGAPPPSRSTVSTAP) are compositionally biased toward polar residues. 2 disordered regions span residues 236 to 283 (EWQQ…LLEE) and 295 to 353 (EAAA…SGFS). Residues 263–278 (SKNKRKKMRRKRKQQK) show a composition bias toward basic residues. Phosphoserine is present on serine 329. Residues 330–339 (PASSSPAPGG) are compositionally biased toward low complexity. The segment covering 344-353 (SPGSQTSGFS) has biased composition (polar residues).

The protein belongs to the protein kinase superfamily. As to expression, highly expressed in skeletal muscle, heart, uterus and parorchis. Weakly expressed in brain, stomach, small intestine and ovary.

The protein resides in the nucleus. Its subcellular location is the cytoplasm. The enzyme catalyses L-seryl-[protein] + ATP = O-phospho-L-seryl-[protein] + ADP + H(+). It carries out the reaction L-threonyl-[protein] + ATP = O-phospho-L-threonyl-[protein] + ADP + H(+). Serine/arginine-rich protein-specific kinase which specifically phosphorylates its substrates at serine residues located in regions rich in arginine/serine dipeptides, known as RS domains. Phosphorylates the SR splicing factor SRSF1 and the lamin-B receptor (LBR) in vitro. Required for normal muscle development. The polypeptide is SRSF protein kinase 3 (SRPK3) (Sus scrofa (Pig)).